The chain runs to 398 residues: Alpha-2,8-sialyltransferase 8F (398 aa).

At 1–3 the chain is on the cytoplasmic side; it reads MRS. Residues 4–24 traverse the membrane as a helical; Signal-anchor for type II membrane protein segment; the sequence is GGTLFALIGSLMLLLLLRMLW. The Lumenal segment spans residues 25–398; it reads CPADAPARSR…KLQFSKCETA (374 aa). 4 N-linked (GlcNAc...) asparagine glycosylation sites follow: N66, N93, N151, and N196. 2 cysteine pairs are disulfide-bonded: C186–C335 and C200–C395. Residues N214, 236–238, and 322–324 contribute to the substrate site; these read NPS and STG. H370 (proton donor/acceptor) is an active-site residue.

This sequence belongs to the glycosyltransferase 29 family. Highly expressed in kidney and expressed and all tissues tested.

Its subcellular location is the golgi apparatus membrane. It catalyses the reaction a ganglioside GM3 + CMP-N-acetyl-beta-neuraminate = a ganglioside GD3 + CMP + H(+). The enzyme catalyses a ganglioside GM3 (d18:1(4E)) + CMP-N-acetyl-beta-neuraminate = a ganglioside GD3 (d18:1(4E)) + CMP + H(+). The catalysed reaction is a ganglioside GD1a (d18:1(4E)) + CMP-N-acetyl-beta-neuraminate = a ganglioside GT1a (d18:1(4E)) + CMP + H(+). It carries out the reaction a ganglioside GD1a + CMP-N-acetyl-beta-neuraminate = a ganglioside GT1a + CMP + H(+). It catalyses the reaction a ganglioside GM1b (d18:1(4E)) + CMP-N-acetyl-beta-neuraminate = a ganglioside GD1c (d18:1(4E)) + CMP + H(+). The enzyme catalyses a ganglioside GM1b + CMP-N-acetyl-beta-neuraminate = a ganglioside GD1c + CMP + H(+). The catalysed reaction is a ganglioside GM4 (d18:1(4E)) + CMP-N-acetyl-beta-neuraminate = an N-acetyl-alpha-neuraminosyl-(2-&gt;8)-N-acetyl-alpha-neuraminosyl-(2-&gt;3)-beta-D-galactosyl-(1&lt;-&gt;1')-N-acylsphing-4-enine + CMP + H(+). It carries out the reaction N-acetyl-alpha-neuraminosyl-(2-&gt;3)-beta-D-galactosyl-(1&lt;-&gt;1')-ceramide + CMP-N-acetyl-beta-neuraminate = N-acetyl-alpha-neuraminosyl-(2-&gt;8)-N-acetyl-alpha-neuraminosyl-(2-&gt;3)-beta-D-galactosyl-(1&lt;-&gt;1')-ceramide + CMP + H(+). It catalyses the reaction a ganglioside GT1b (d18:1(4E)) + CMP-N-acetyl-beta-neuraminate = a ganglioside GQ1b (d18:1(4E)) + CMP + H(+). The enzyme catalyses a ganglioside GT1b + CMP-N-acetyl-beta-neuraminate = a ganglioside GQ1b + CMP + H(+). The protein operates within protein modification; protein glycosylation. Its function is as follows. Alpha-2,8-sialyltransferase that prefers O-glycans to N-glycans or glycolipids as acceptor substrates. The minimal acceptor substrate is the NeuAc-alpha-2,3(6)-Gal sequence at the non-reducing end of their carbohydrate groups. This is Alpha-2,8-sialyltransferase 8F from Mus musculus (Mouse).